The sequence spans 335 residues: Dye-decolorizing peroxidase (335 aa).

Residue Asp149 is the Proton acceptor of the active site. Residue His222 participates in heme binding. The interval 312-335 (LPQAATPTLAAGSLSIGSLKGSPR) is targeting peptide.

The protein belongs to the DyP-type peroxidase family. As to quaternary structure, homotetramer, presumably also in the encapsulin nanocompartment. The cofactor is heme b.

The protein localises to the encapsulin nanocompartment. The catalysed reaction is 2 a phenolic donor + H2O2 = 2 a phenolic radical donor + 2 H2O. Functionally, cargo of a type 1 encapsulin nanocompartment in situ; this cargo protects against oxidative stress at low pH. When expressed in the cytoplasm (absence of the encapsulin shell gene) it is almost as protective as the intact nanocompartment; its encapsulation has a modest yet significant effect on protection against oxidative stress at low pH. A heme-dependent peroxidase, it probably does not have deferrochelatase activity. Converts guaiacol and H2O2 to tetraguaiacol, also acts on 2,2'-azino-bis(3-ethylbenzothiazoline-6-sulfonic acid) (ABTS). Retains peroxidase activity when encapsulated but has a reduced set of substrates; acts on ABTS but not guaiacol. The sequence is that of Dye-decolorizing peroxidase from Mycobacterium tuberculosis (strain ATCC 25618 / H37Rv).